We begin with the raw amino-acid sequence, 528 residues long: PH domain-containing protein DDB_G0267786 (528 aa).

The region spanning 59-180 (SDVFSGYLVK…WIEIFKTCCR (122 aa)) is the PH domain.

This is PH domain-containing protein DDB_G0267786 from Dictyostelium discoideum (Social amoeba).